The sequence spans 461 residues: Probable lipid II flippase MurJ (461 aa).

Transmembrane regions (helical) follow at residues 5–25 (ILGAGVYSDIFFVAFKLPNLF), 51–71 (FASLVGLIFCIVLFMWCLLVA), 96–116 (IVAINFWYLLLVFITTFLGAL), 123–143 (FFASAYSASLLNVCMILALLI), 156–176 (LSYGVLLGGVAQILLHFYPLV), 229–249 (IASFLDTTIASFLASGSVSYL), 258–278 (LPLALFAIAISTALFPSIAIA), 293–313 (KAWFFLVGVLLLCSIGGIMLS), 337–357 (VFSLYLLGLLPFGLTKLFSLW), 372–392 (LISLFLGLAASLSLMPLLGVL), 402–422 (GLFLFVLTIKAFGFQLFLGII), and 429–449 (LVILFLACVEILLLLAFKSWV).

Belongs to the MurJ/MviN family.

The protein localises to the cell inner membrane. It participates in cell wall biogenesis; peptidoglycan biosynthesis. In terms of biological role, involved in peptidoglycan biosynthesis. Transports lipid-linked peptidoglycan precursors from the inner to the outer leaflet of the cytoplasmic membrane. The chain is Probable lipid II flippase MurJ from Helicobacter pylori (strain ATCC 700392 / 26695) (Campylobacter pylori).